The primary structure comprises 102 residues: uncharacterized protein (102 aa).

This is an uncharacterized protein from Saccharomyces cerevisiae (strain ATCC 204508 / S288c) (Baker's yeast).